We begin with the raw amino-acid sequence, 126 residues long: uncharacterized protein (126 aa).

This is an uncharacterized protein from Invertebrate iridescent virus 6 (IIV-6).